Reading from the N-terminus, the 266-residue chain is Sec-independent protein translocase protein TatC (266 aa).

6 consecutive transmembrane segments (helical) span residues 28 to 48 (MIIA…YILF), 93 to 113 (FNIY…PYIF), 134 to 154 (GIIM…YFIL), 183 to 203 (LIMH…FIYF), 221 to 241 (HAFL…IFST), and 242 to 262 (IVVL…SFYV).

Belongs to the TatC family. As to quaternary structure, forms a complex with TatA.

The protein resides in the cell inner membrane. Functionally, part of the twin-arginine translocation (Tat) system that transports large folded proteins containing a characteristic twin-arginine motif in their signal peptide across membranes. The protein is Sec-independent protein translocase protein TatC of Blattabacterium sp. subsp. Periplaneta americana (strain BPLAN) (Periplaneta americana symbiotic bacterium).